Consider the following 279-residue polypeptide: 32 kDa beta-galactoside-binding lectin (279 aa).

2 consecutive Galectin domains span residues 13–144 (YRSV…VHWG) and 152–279 (YESG…IQIQ). An a beta-D-galactoside-binding site is contributed by 213–219 (WGNEERE).

The N-terminus is blocked.

Functionally, binds galactose. The protein is 32 kDa beta-galactoside-binding lectin (lec-1) of Caenorhabditis elegans.